Here is a 395-residue protein sequence, read N- to C-terminus: Prostaglandin D2 receptor 2 (395 aa).

Residues 1–33 are Extracellular-facing; that stretch reads MSANATLKPLCPILEQMSRLQSHSNTSIRYIDH. N-linked (GlcNAc...) asparagine glycosylation is found at N4 and N25. The chain crosses the membrane as a helical span at residues 34 to 56; sequence AAVLLHGLASLLGLVENGVILFV. Residues 57–67 are Cytoplasmic-facing; sequence VGCRMRQTVVT. Residues 68–89 form a helical membrane-spanning segment; the sequence is TWVLHLALSDLLASASLPFFTY. The Extracellular portion of the chain corresponds to 90 to 106; it reads FLAVGHSWELGTTFCKL. C104 and C182 form a disulfide bridge. Residues 107-127 traverse the membrane as a helical segment; the sequence is HSSIFFLNMFASGFLLSAISL. Topologically, residues 128–146 are cytoplasmic; sequence DRCLQVVRPVWAQNHRTVA. Residues 147–168 form a helical membrane-spanning segment; that stretch reads AAHKVCLVLWALAVLNTVPYFV. The Extracellular segment spans residues 169–210; it reads FRDTISRLDGRIMCYYNVLLLNPGPDRDATCNSRQVALAVSK. A helical transmembrane segment spans residues 211–231; sequence FLLAFLVPLAIIASSHAAVSL. Topologically, residues 232-247 are cytoplasmic; it reads RLQHRGRRRPGRFVRL. A helical transmembrane segment spans residues 248 to 269; it reads VAAVVAAFALCWGPYHVFSLLE. The Extracellular segment spans residues 270–288; that stretch reads ARAHANPGLRPLVWRGLPF. A helical transmembrane segment spans residues 289–308; it reads VTSLAFFNSVANPVLYVLTC. Residues 309–395 lie on the Cytoplasmic side of the membrane; the sequence is PDMLRKLRRS…LNRALSSTSS (87 aa). The Involved in the recycling of CRTH2 motif lies at 330-333; sequence DSEL. Phosphoserine occurs at positions 331 and 345. The disordered stretch occupies residues 333-363; sequence LGGAGSSRRRRTSSTARSASPLALCSRPEEP.

This sequence belongs to the G-protein coupled receptor 1 family. Phosphorylated. As to expression, widespread expression. High expression in stomach, small intestine, heart and thymus. Intermediate expression in colon, spinal cord and peripheral blood and low expression in brain, skeletal muscle and spleen. Expressed also on Th2- and Tc2- type cells, eosinophils and basophils.

It is found in the cell membrane. Its function is as follows. Receptor for prostaglandin D2 (PGD2). Coupled to the G(i)-protein. Receptor activation may result in pertussis toxin-sensitive decreases in cAMP levels and Ca(2+) mobilization. PI3K signaling is also implicated in mediating PTGDR2 effects. PGD2 induced receptor internalization. CRTH2 internalization can be regulated by diverse kinases such as, PKC, PKA, GRK2, GPRK5/GRK5 and GRK6. Receptor activation is responsible, at least in part, in immune regulation and allergic/inflammation responses. In Homo sapiens (Human), this protein is Prostaglandin D2 receptor 2 (PTGDR2).